We begin with the raw amino-acid sequence, 452 residues long: 3-phosphoshikimate 1-carboxyvinyltransferase (452 aa).

3-phosphoshikimate-binding residues include lysine 24, serine 25, and arginine 29. Lysine 24 contributes to the phosphoenolpyruvate binding site. Phosphoenolpyruvate is bound by residues glycine 95 and arginine 123. 3-phosphoshikimate-binding residues include serine 167, glutamine 169, aspartate 319, and lysine 346. Residue glutamine 169 coordinates phosphoenolpyruvate. Aspartate 319 acts as the Proton acceptor in catalysis. Phosphoenolpyruvate is bound by residues arginine 350 and arginine 394.

It belongs to the EPSP synthase family. Monomer.

The protein resides in the cytoplasm. It catalyses the reaction 3-phosphoshikimate + phosphoenolpyruvate = 5-O-(1-carboxyvinyl)-3-phosphoshikimate + phosphate. Its pathway is metabolic intermediate biosynthesis; chorismate biosynthesis; chorismate from D-erythrose 4-phosphate and phosphoenolpyruvate: step 6/7. In terms of biological role, catalyzes the transfer of the enolpyruvyl moiety of phosphoenolpyruvate (PEP) to the 5-hydroxyl of shikimate-3-phosphate (S3P) to produce enolpyruvyl shikimate-3-phosphate and inorganic phosphate. The sequence is that of 3-phosphoshikimate 1-carboxyvinyltransferase from Phenylobacterium zucineum (strain HLK1).